Reading from the N-terminus, the 194-residue chain is Cysteine and glycine-rich protein 2 (194 aa).

The LIM zinc-binding 1 domain occupies 10–61 (CGACGRTVYHAEEVQCDGRSFHRCCFLCMVCRKNLDSTTVAIHDAEVYCKSC). The Nuclear localization signal motif lies at 64 to 69 (KKYGPK). A disordered region spans residues 85-110 (GERLGIKPESSPSPHRPTTNPNTSKF). Over residues 94–110 (SSPSPHRPTTNPNTSKF) the composition is skewed to polar residues. In terms of domain architecture, LIM zinc-binding 2 spans 120–171 (CSRCGDSVYAAEKVIGAGKPWHKNCFRCAKCGKSLESTTLTEKEGEIYCKGC).

Its subcellular location is the nucleus. Functionally, interacts with zyxin. May be a component of a signal transduction pathway that mediates adhesion-stimulated changes in gene expression. Totally down-regulated in transformed cells. In Coturnix japonica (Japanese quail), this protein is Cysteine and glycine-rich protein 2 (CSRP2).